A 265-amino-acid polypeptide reads, in one-letter code: MRVLALSAVFLVASIIGMPAVAKEWQENKSWNAHFTEHKSQGVVVLWNENKQQGFTNNLKRANQAFLPASTFKIPNSLIALDLGVVKDEHQVFKWDGQTRDIATWNRDHNLITAMKYSVVPVYQEFARQIGEARMSKMLHAFDYGNEDISGNVDSFWLDGGIRISATEQISFLRKLYHNKLHVSERSQRIVKQAMLTEANGDYIIRAKTGYSTRIEPKIGWWVGWVELDDNVWFFAMNMDMPTSDGLGLRQAITKEVLKQEKIIP.

Positions 1-22 (MRVLALSAVFLVASIIGMPAVA) are cleaved as a signal peptide. Residue Ser-70 is the Acyl-ester intermediate of the active site. Positions 70, 73, 118, and 250 each coordinate a beta-lactam. Lys-73 bears the N6-carboxylysine mark.

The protein belongs to the class-D beta-lactamase family. In terms of assembly, monomer. Dimer. In terms of processing, carboxylated on the epsilon-amino group of a lysine, with the resulting carbamate functional group serving as a general base. Probably N-carboxylated at Lys-73 at neutral pH in vivo and undergoes complete N-decarboxylation, at pH 4.1, in vitro.

The catalysed reaction is a beta-lactam + H2O = a substituted beta-amino acid. With respect to regulation, inhibited by avibactam, related diazabicyclooctane (DBO) derivatives and by bicyclic boronic acids, via a covalent binding to Ser-70. Inhibited by chloride, bromide and iodide ions. Not inhibited by the beta-lactamase-blocking agents, clavulanic acid or tazobactam. In terms of biological role, class D beta-lactamase which confers resistance to the beta-lactam antibiotics, including amoxicillin, and moderate resistance to cephalosporins and carbapenems such as cephalothin and imipenem; in the DH10B strain of E.coli. Acts via hydrolysis of the beta-lactam ring. Has oxacillin-, cephalothin- and imipenem-hydrolyzing activities. The sequence is that of Beta-lactamase OXA-48 from Klebsiella pneumoniae.